We begin with the raw amino-acid sequence, 633 residues long: Pesticidal crystal protein Cry2Ad (633 aa).

The protein belongs to the delta endotoxin family.

Its function is as follows. Promotes colloidosmotic lysis by binding to the midgut epithelial cells of insects. The polypeptide is Pesticidal crystal protein Cry2Ad (cry2Ad) (Bacillus thuringiensis).